A 125-amino-acid chain; its full sequence is U11-myrmicitoxin-Ta1a (125 aa).

A signal peptide spans 1 to 21 (MKTVIFILGFAFVAILIPTNG). The propeptide occupies 22 to 91 (ESMADADAMA…RAMAAAYAAA (70 aa)). An intrachain disulfide couples cysteine 101 to cysteine 124.

Belongs to the formicidae venom precursor-01 superfamily. In terms of tissue distribution, expressed by the venom gland.

The protein localises to the secreted. Its subcellular location is the target cell membrane. Functionally, neurotoxin that causes irreversible rapid flaccid paralysis in blowflies and honeybees upon intrathoracic injection. Causes a quick and irreversible cytolytic effect (at 10 uM) indicating it possibly acts as a pore-forming peptide. Shows only weak effect on aphids (A.pisum) at high doses 24 hours post intrathoracic injection. In vitro, is not cytotoxic on the dipteran S2 Drosophila embryonic cell line. This is U11-myrmicitoxin-Ta1a from Tetramorium africanum (Fierce ant).